The primary structure comprises 282 residues: MSKEVISEEGQVHQHGKDYVDPPPAPFFDMGELKLWSFWRAAIAEFIATLLFLYITVATVIGYKKETDPCASVGLLGIAWSFGGMIFVLVYCTAGISGGHINPAVTFGLFLARKVSLLRALVYMIAQCAGAICGVGLVKAFMKGPYNQFGGGANSVALGYNKGTAFGAELIGTFVLVYTVFSATDPKRSARDSHVPILAPLPIGFAVFMVHLATIPITGTGINPARSFGAAVIYNKKRVWDDHWIFWVGPFVGALAAAAYHQYVLRAAAIKALGSFRSNPTN.

2 helical membrane passes run 39 to 61 and 74 to 96; these read WRAA…ATVI and GLLG…TAGI. The NPA 1 motif lies at 102–104; the sequence is NPA. Helical transmembrane passes span 116-138, 159-181, 201-223, and 243-265; these read SLLR…VGLV, GYNK…YTVF, LPIG…TGIN, and HWIF…QYVL. The NPA 2 signature appears at 223–225; it reads NPA.

It belongs to the MIP/aquaporin (TC 1.A.8) family. PIP (TC 1.A.8.11) subfamily.

Its subcellular location is the membrane. Functionally, water-specific channel. This Atriplex canescens (Fourwing saltbush) protein is Aquaporin PIP-type.